Consider the following 76-residue polypeptide: UPF0235 protein MMAR_2910 (76 aa).

Belongs to the UPF0235 family.

This is UPF0235 protein MMAR_2910 from Mycobacterium marinum (strain ATCC BAA-535 / M).